Consider the following 102-residue polypeptide: Thioredoxin (102 aa).

Residues 2–102 enclose the Thioredoxin domain; it reads VTEIRSLKQL…KTKIIDLFNN (101 aa). Cys30 and Cys33 are joined by a disulfide.

The protein belongs to the thioredoxin family.

Its function is as follows. Participates in various redox reactions through the reversible oxidation of its active center dithiol to a disulfide and catalyzes dithiol-disulfide exchange reactions. This is Thioredoxin (trxA) from Mycoplasma genitalium (strain ATCC 33530 / DSM 19775 / NCTC 10195 / G37) (Mycoplasmoides genitalium).